Reading from the N-terminus, the 422-residue chain is Pre-B-cell leukemia transcription factor 2 (422 aa).

The tract at residues 1–43 (MDEQGRLMQARGVGIPGHPIHGGPQTLTPHPMHEPPADNGEPR) is disordered. A compositionally biased stretch (basic and acidic residues) spans 31 to 43 (PMHEPPADNGEPR). Positions 42–236 (PRKQDIGDIL…VMILRSRFLD (195 aa)) constitute a PBC domain. Residues 49 to 128 (DILQQIMTIT…EGVAGPEKGG (80 aa)) form a PBC-A region. Residues 131–236 (AAAAAAAAAS…VMILRSRFLD (106 aa)) form a PBC-B region. Positions 237-299 (ARRKRRNFSK…NKRIRYKKNI (63 aa)) form a DNA-binding region, homeobox. Disordered stretches follow at residues 319-341 (QGGHSGANSPTTPTSAGSGGSFN) and 353-422 (QGLN…DTSN). The span at 401–410 (VTPSSVTSPT) shows a compositional bias: polar residues.

Belongs to the TALE/PBX homeobox family.

The protein resides in the nucleus. In terms of biological role, transcriptional activator that binds the sequence 5'-ATCAATCAA-3'. This chain is Pre-B-cell leukemia transcription factor 2, found in Xenopus tropicalis (Western clawed frog).